The chain runs to 483 residues: Trehalose-6-phosphate synthase (483 aa).

Arg-22 contributes to the D-glucose 6-phosphate binding site. 42–43 is a UDP-alpha-D-glucose binding site; it reads GG. Tyr-94 and Asp-148 together coordinate D-glucose 6-phosphate. Arg-290 and Lys-295 together coordinate UDP-alpha-D-glucose. Residue Arg-328 participates in D-glucose 6-phosphate binding. 393 to 397 contributes to the UDP-alpha-D-glucose binding site; that stretch reads LVAKE.

This sequence belongs to the glycosyltransferase 20 family. Homotetramer.

The enzyme catalyses ADP-alpha-D-glucose + D-glucose 6-phosphate = alpha,alpha-trehalose 6-phosphate + ADP + H(+). It carries out the reaction CDP-alpha-D-glucose + D-glucose 6-phosphate = alpha,alpha-trehalose 6-phosphate + CDP + H(+). It catalyses the reaction GDP-alpha-D-glucose + D-glucose 6-phosphate = alpha,alpha-trehalose 6-phosphate + GDP + H(+). The catalysed reaction is TDP-alpha-D-glucose + D-glucose 6-phosphate = 5-methyl-UDP + alpha,alpha-trehalose 6-phosphate + H(+). The enzyme catalyses D-glucose 6-phosphate + UDP-alpha-D-glucose = alpha,alpha-trehalose 6-phosphate + UDP + H(+). Its pathway is glycan biosynthesis; trehalose biosynthesis. Its function is as follows. Probably involved in the osmoprotection via the biosynthesis of trehalose and in the production of glycogen and alpha-glucan via the TreS-Pep2 branch involved in the biosynthesis of maltose-1-phosphate (M1P). Catalyzes the transfer of glucose from UDP-glucose (UDP-Glc) to D-glucose 6-phosphate (Glc-6-P) to form trehalose-6-phosphate. Probably also able to use ADP-Glc, CDP-Glc, GDP-Glc and TDP-Glc as glucosyl donors. This is Trehalose-6-phosphate synthase from Mycobacterium sp. (strain JLS).